Consider the following 257-residue polypeptide: Uroplakin-1a (257 aa).

The Cytoplasmic segment spans residues 1–13 (MASAATEGEKGSP). Residues 14–34 (VVVGLLVVGNIIILLSGLALF) form a helical membrane-spanning segment. Over 35-58 (AETVWVTADQYRVYPLMGVSGKDD) the chain is Extracellular. The chain crosses the membrane as a helical span at residues 59–85 (VFAGAWIAIFCGFSFFVVASFGVGAAL). At 86–90 (CRRRY) the chain is on the cytoplasmic side. The helical transmembrane segment at 91 to 111 (MILTYLLLMLIVYIFECASCI) threads the bilayer. At 112–229 (TSYTHRDYMV…HIGHAIDSYT (118 aa)) the chain is on the extracellular side. Asparagine 169 carries N-linked (GlcNAc...) asparagine glycosylation. The chain crosses the membrane as a helical span at residues 230–251 (WGISWFGFAILMWTLPVMLIAM). Over 252-257 (YFYTTL) the chain is Cytoplasmic.

Belongs to the tetraspanin (TM4SF) family. In terms of assembly, homodimer; disulfide-linked. Interacts with uroplakin-2 (UPK2). Binds to uropathogenic E.coli fimH.

The protein localises to the membrane. Functionally, component of the asymmetric unit membrane (AUM); a highly specialized biomembrane elaborated by terminally differentiated urothelial cells. May play an important role in normal bladder epithelial physiology, possibly in regulating membrane permeability of superficial umbrella cells or in stabilizing the apical membrane through AUM/cytoskeletal interactions. This is Uroplakin-1a (Upk1a) from Mus musculus (Mouse).